The chain runs to 172 residues: Adenine phosphoribosyltransferase (172 aa).

This sequence belongs to the purine/pyrimidine phosphoribosyltransferase family. As to quaternary structure, homodimer.

The protein resides in the cytoplasm. The enzyme catalyses AMP + diphosphate = 5-phospho-alpha-D-ribose 1-diphosphate + adenine. It functions in the pathway purine metabolism; AMP biosynthesis via salvage pathway; AMP from adenine: step 1/1. Functionally, catalyzes a salvage reaction resulting in the formation of AMP, that is energically less costly than de novo synthesis. In Roseiflexus castenholzii (strain DSM 13941 / HLO8), this protein is Adenine phosphoribosyltransferase.